We begin with the raw amino-acid sequence, 1723 residues long: Lymphocyte antigen 75 (1723 aa).

The first 27 residues, 1 to 27 (MRTGRVTPGLAAGLLLLLLRSFGLVEP), serve as a signal peptide directing secretion. Over 28-1667 (SESSGNDPFT…AVCKIPLSPD (1640 aa)) the chain is Extracellular. The 150-residue stretch at 33–182 (NDPFTIVHEN…FLIGETWYHD (150 aa)) folds into the Ricin B-type lectin domain. A glycan (N-linked (GlcNAc...) asparagine) is linked at asparagine 135. The Fibronectin type-II domain occupies 164 to 211 (SYGRPCEFPFLIGETWYHDCIHDEDHSGPWCATTLSYEYDQKWGICLL). 4 cysteine pairs are disulfide-bonded: cysteine 169-cysteine 194, cysteine 183-cysteine 209, cysteine 247-cysteine 340, and cysteine 317-cysteine 332. The region spanning 225-341 (QIGSCYQFNN…CESQQPYVCK (117 aa)) is the C-type lectin 1 domain. 2 N-linked (GlcNAc...) asparagine glycosylation sites follow: asparagine 345 and asparagine 377. C-type lectin domains follow at residues 368 to 486 (NNGF…YVCK), 493 to 625 (KDAE…ICKK), and 652 to 791 (SSLS…WVCQ). Disulfide bonds link cysteine 389/cysteine 485 and cysteine 462/cysteine 477. The N-linked (GlcNAc...) asparagine glycan is linked to asparagine 529. 3 cysteine pairs are disulfide-bonded: cysteine 597/cysteine 614, cysteine 678/cysteine 790, and cysteine 752/cysteine 782. N-linked (GlcNAc...) asparagine glycosylation is found at asparagine 843 and asparagine 865. The residue at position 934 (tyrosine 934) is a Phosphotyrosine. N-linked (GlcNAc...) asparagine glycosylation is found at asparagine 935, asparagine 1077, and asparagine 1104. One can recognise a C-type lectin 5 domain in the interval 959–1092 (FQNKCFLKVN…ERHSLSLCQK (134 aa)). A disulfide bond links cysteine 1061 and cysteine 1081. The region spanning 1111–1223 (YLNNLYKIIS…DNQPGAICYY (113 aa)) is the C-type lectin 6 domain. Cysteines 1198 and 1212 form a disulfide. 3 N-linked (GlcNAc...) asparagine glycosylation sites follow: asparagine 1226, asparagine 1321, and asparagine 1393. A C-type lectin 7 domain is found at 1252–1375 (FQNSCYNFMI…VIEETLHFYQ (124 aa)). C-type lectin domains follow at residues 1402–1514 (YKDG…ICYK) and 1543–1662 (YGGH…VCKI). Cysteines 1489 and 1503 form a disulfide. Asparagine 1594 and asparagine 1627 each carry an N-linked (GlcNAc...) asparagine glycan. A disulfide bridge links cysteine 1636 with cysteine 1651. The chain crosses the membrane as a helical span at residues 1668-1692 (YTGIAILFAVLCLLGLISLAIWFLL). Over 1693-1723 (QRSHIRWTGFSSVRYEHGTNEDEVMLPSFHD) the chain is Cytoplasmic. Phosphoserine is present on residues serine 1704 and serine 1720.

In terms of processing, N-glycosylated. Expressed in dendritic and thymic epithelial cells and lymph nodes.

Its subcellular location is the membrane. Its function is as follows. Acts as an endocytic receptor to direct captured antigens from the extracellular space to a specialized antigen-processing compartment. Causes reduced proliferation of B lymphocytes. This chain is Lymphocyte antigen 75 (Ly75), found in Mus musculus (Mouse).